We begin with the raw amino-acid sequence, 384 residues long: Cytochrome b (384 aa).

4 helical membrane passes run 33 to 53 (YGSL…FLAM), 77 to 98 (WLIR…YLHI), 113 to 133 (WNVG…GYVL), and 178 to 198 (FFAF…IHLL). Positions 83 and 97 each coordinate heme b. Residues histidine 182 and histidine 196 each coordinate heme b. Histidine 201 is a binding site for a ubiquinone. 4 helical membrane passes run 226 to 246 (YKDL…ALFT), 288 to 308 (LGGV…PILH), 320 to 340 (LSQM…WIGG), and 347 to 367 (FIII…VLMP).

Belongs to the cytochrome b family. The cytochrome bc1 complex contains 3 respiratory subunits (MT-CYB, CYC1 and UQCRFS1), 2 core proteins (UQCRC1 and UQCRC2) and probably 6 low-molecular weight proteins. It depends on heme b as a cofactor.

It localises to the mitochondrion inner membrane. Its function is as follows. Component of the ubiquinol-cytochrome c reductase complex (complex III or cytochrome b-c1 complex) that is part of the mitochondrial respiratory chain. The b-c1 complex mediates electron transfer from ubiquinol to cytochrome c. Contributes to the generation of a proton gradient across the mitochondrial membrane that is then used for ATP synthesis. This Anoplogaster cornuta (Common fangtooth) protein is Cytochrome b (mt-cyb).